Consider the following 112-residue polypeptide: Large ribosomal subunit protein eL30 (112 aa).

The protein belongs to the eukaryotic ribosomal protein eL30 family.

This Zea mays (Maize) protein is Large ribosomal subunit protein eL30 (RPL30).